The sequence spans 287 residues: Festuclavine synthase I (287 aa).

This sequence belongs to the fgaFS/easG family.

The catalysed reaction is festuclavine + NAD(+) = 6,8-dimethyl-6,7-didehydroergoline + NADH + H(+). It participates in alkaloid biosynthesis; ergot alkaloid biosynthesis. Its function is as follows. Festuclavine synthase; part of the gene cluster that mediates the biosynthesis of isofumigaclavines, fungal ergot alkaloids. The tryptophan dimethylallyltransferase ifgA catalyzes the first step of ergot alkaloid biosynthesis by condensing dimethylallyl diphosphate (DMAP) and tryptophan to form 4-dimethylallyl-L-tryptophan. The second step is catalyzed by the methyltransferase ifgB that methylates 4-dimethylallyl-L-tryptophan in the presence of S-adenosyl-L-methionine, resulting in the formation of N-methyl-dimethylallyl-L-tryptophan. The catalase ifgD and the FAD-dependent oxidoreductase ifgC then transform N-methyl-dimethylallyl-L-tryptophan to chanoclavine-I which is further oxidized by ifgE in the presence of NAD(+), resulting in the formation of chanoclavine-I aldehyde. The chanoclavine-I aldehyde reductases ifgG and/or fgaOx3 reduce chanoclavine-I aldehyde to dihydrochanoclavine-I aldehyde that spontaneously dehydrates to form 6,8-dimethyl-6,7-didehydroergoline. The festuclavine dehydrogenases ifgF1 and/or ifgF2 then catalyze the reduction of 6,8-dimethyl-6,7-didehydroergoline to form festuclavine. Hydrolysis of festuclavine by a yet undetermined cytochrome P450 monooxygenase (called ifgH) then leads to the formation of isofumigaclavine B which is in turn acetylated by ifgI to isofumigaclavine A. Penicillium roqueforti has interestingly at least two sets of genes for the consumption of chanoclavine-I aldehyde on three different loci, the OYEs ifgG/fgaOx3 and the festuclavine synthase homologs ifgF1/ifgF2. The reason for the duplication of these genes is unclear, probably to ensure the conversion of chanoclavine-I aldehyde by differential gene expression under various environmental conditions. This chain is Festuclavine synthase I, found in Penicillium roqueforti (strain FM164).